The chain runs to 473 residues: O-methyltransferase aclU (473 aa).

S-adenosyl-L-methionine-binding positions include D320 and 354 to 356 (GDF). H373 serves as the catalytic Proton acceptor.

It belongs to the class I-like SAM-binding methyltransferase superfamily. Cation-independent O-methyltransferase family. COMT subfamily.

It participates in mycotoxin biosynthesis. In terms of biological role, O-methyltransferase; part of the gene cluster that mediates the biosynthesis of aspirochlorine (or antibiotic A30641), an unusual halogenated spiro compound with distinctive antifungal properties due to selective inhibition of protein biosynthesis, and which is also active against bacteria, viruses, and murine tumor cells. The non-ribosomal peptide synthetase (NRPS) aclP is responsible the formation of the diketopiperazine (DKP) core from the condensation of 2 phenylalanine residues. One Phe residue is tailored into chlorotyrosine by hydroxylation and chlorination, whereas the second Phe undergoes an unprecedented C-C bond cleavage to be converted into glycine. After formation of the DKP, sulfur is incorporated into the DKP by conjugation with glutathione by aclG, followed by its stepwise degradation to the thiol by aclI, aclJ and aclK, and the dithiol oxidation by aclT. In addition, oxygenases (aclB, aclC, aclL and aclO) and O-methyltransferases (aclM and aclU) act as tailoring enzymes to produce the intermediate dechloroaspirochlorine. Ultimately, chlorination of dechloroaspirochlorine by the halogenase aclH is the last step in the aspirochlorine pathway. This chain is O-methyltransferase aclU, found in Aspergillus oryzae (strain ATCC 42149 / RIB 40) (Yellow koji mold).